A 684-amino-acid polypeptide reads, in one-letter code: Sec1 family domain-containing protein 2 (684 aa).

The protein belongs to the STXBP/unc-18/SEC1 family.

May be involved in protein transport. The protein is Sec1 family domain-containing protein 2 (SCFD2) of Homo sapiens (Human).